A 340-amino-acid polypeptide reads, in one-letter code: Probable glucan endo-1,3-beta-glucosidase BG1 (340 aa).

The N-terminal stretch at 1-25 (MDLRFLASLTLLLGLFFVNTNPTGG) is a signal peptide. Residue E120 is the Proton donor of the active site. E262 functions as the Nucleophile in the catalytic mechanism.

Belongs to the glycosyl hydrolase 17 family.

The protein resides in the secreted. The catalysed reaction is Hydrolysis of (1-&gt;3)-beta-D-glucosidic linkages in (1-&gt;3)-beta-D-glucans.. May play a role in plant defense against pathogens. This chain is Probable glucan endo-1,3-beta-glucosidase BG1, found in Arabidopsis thaliana (Mouse-ear cress).